Consider the following 310-residue polypeptide: Olfactory receptor 5P53 (310 aa).

Topologically, residues 1 to 25 (MEAENHTTVAELIILGLTEDPKLCI) are extracellular. N5 carries N-linked (GlcNAc...) asparagine glycosylation. The helical transmembrane segment at 26 to 46 (VFFVIFLGVYIVTLVGNISII) threads the bilayer. Residues 47 to 54 (TLIRISSQ) are Cytoplasmic-facing. The chain crosses the membrane as a helical span at residues 55–75 (LHTPMYLFLSHLAFVDILYST). Residues 76–99 (SVSVIMHMELLGHGLALPVAACAA) are Extracellular-facing. An intrachain disulfide couples C97 to C189. The chain crosses the membrane as a helical span at residues 100 to 120 (QLCITVSFGSAECFLLAAMAY). The Cytoplasmic segment spans residues 121 to 133 (DRYVAICSPLLYS). Residues 134 to 154 (TLMSPRVCFLLLGMSYVGGCM) traverse the membrane as a helical segment. Topologically, residues 155–196 (NGWTFTGCLLSLSFCGPNQIDHFFCDFSPLLKLSCSDVSIIG) are extracellular. A helical membrane pass occupies residues 197–217 (IIPSISSGSIIVVTVFVIAVS). Residues 218-237 (YIYILITILNMRSTEGRHKA) are Cytoplasmic-facing. The helical transmembrane segment at 238-258 (FSTCTSHLTAVTLYYGTITFI) threads the bilayer. At 259 to 271 (YVMPKSNYSTEQN) the chain is on the extracellular side. N265 carries an N-linked (GlcNAc...) asparagine glycan. Residues 272-292 (KVLSVFYTVVIPMLNPLIYSL) traverse the membrane as a helical segment. At 293 to 310 (RNRDVKEALRKATVRVYS) the chain is on the cytoplasmic side.

The protein belongs to the G-protein coupled receptor 1 family.

Its subcellular location is the cell membrane. In terms of biological role, potential odorant receptor. The protein is Olfactory receptor 5P53 of Mus musculus (Mouse).